The primary structure comprises 415 residues: Phosphoglycerate kinase (415 aa).

(2R)-3-phosphoglycerate-binding residues include V22, D23, F24, N25, Q37, R38, S61, H62, G64, L120, R121, H168, and R169. G212 serves as a coordination point for ADP. G212 is a CDP binding site. AMP-binding residues include A213 and K214. Residue A213 coordinates ATP. Residue A213 participates in Mg(2+) binding. D217 is a CDP binding site. D217 is a Mg(2+) binding site. K218 lines the AMP pocket. Residue K218 coordinates ATP. Residue G236 participates in ADP binding. G236 provides a ligand contact to CDP. Residues G237 and G311 each contribute to the AMP site. Residues G237 and G311 each coordinate ATP. CDP-binding residues include G336 and F341. F341 contributes to the ADP binding site. Residue E342 participates in AMP binding. 3 residues coordinate ATP: E342, D373, and T374. Residue D373 participates in Mg(2+) binding.

It belongs to the phosphoglycerate kinase family. Monomer. It depends on Mg(2+) as a cofactor.

It localises to the cytoplasm. The enzyme catalyses (2R)-3-phosphoglycerate + ATP = (2R)-3-phospho-glyceroyl phosphate + ADP. The protein operates within carbohydrate degradation; glycolysis; pyruvate from D-glyceraldehyde 3-phosphate: step 2/5. This is Phosphoglycerate kinase (PGK) from Opisthorchis sinensis (Clonorchis sinensis).